A 324-amino-acid polypeptide reads, in one-letter code: Formimidoylglutamase (324 aa).

Mn(2+) is bound by residues histidine 124, aspartate 153, histidine 155, aspartate 157, aspartate 245, and aspartate 247.

Belongs to the arginase family. Requires Mn(2+) as cofactor.

It catalyses the reaction N-formimidoyl-L-glutamate + H2O = formamide + L-glutamate. It participates in amino-acid degradation; L-histidine degradation into L-glutamate; L-glutamate from N-formimidoyl-L-glutamate (hydrolase route): step 1/1. Its function is as follows. Catalyzes the conversion of N-formimidoyl-L-glutamate to L-glutamate and formamide. The protein is Formimidoylglutamase of Hahella chejuensis (strain KCTC 2396).